The sequence spans 428 residues: NADH-ubiquinone oxidoreductase chain 2 (428 aa).

A run of 14 helical transmembrane segments spans residues 22–42 (IAFL…LHFG), 59–79 (LDES…VIMN), 84–104 (LGWE…YMLT), 108–128 (LLLM…ILSL), 140–160 (LLSS…FYGL), 185–205 (ILLL…LWVP), 218–238 (WMGS…YPLL), 241–261 (LAPF…VLMA), 269–289 (FLAY…AIGD), 292–312 (AYGY…VLLS), 332–352 (LGLG…FAGF), 356–376 (LLVL…LLIL), 384–404 (YYLK…SAPI), and 408–428 (YPNL…LLLL).

This sequence belongs to the complex I subunit 2 family.

The protein localises to the mitochondrion inner membrane. It catalyses the reaction a ubiquinone + NADH + 5 H(+)(in) = a ubiquinol + NAD(+) + 4 H(+)(out). Functionally, core subunit of the mitochondrial membrane respiratory chain NADH dehydrogenase (Complex I) that is believed to belong to the minimal assembly required for catalysis. Complex I functions in the transfer of electrons from NADH to the respiratory chain. The immediate electron acceptor for the enzyme is believed to be ubiquinone. In Hyaloraphidium curvatum (Lower fungus), this protein is NADH-ubiquinone oxidoreductase chain 2.